Consider the following 284-residue polypeptide: Probable 3-mercaptopyruvate sulfurtransferase (284 aa).

Rhodanese domains are found at residues serine 17–asparagine 138 and glycine 168–alanine 281. Arginine 182 provides a ligand contact to substrate. Cysteine 241 (cysteine persulfide intermediate) is an active-site residue. A substrate specificity region spans residues cysteine 241–alanine 247.

It localises to the cytoplasm. It catalyses the reaction 2-oxo-3-sulfanylpropanoate + [thioredoxin]-dithiol = [thioredoxin]-disulfide + hydrogen sulfide + pyruvate + H(+). In terms of biological role, catalyzes the transfer of sulfur from 3-mercaptopyruvate to a thiol-containing acceptor to form an intramolecular disulfide releasing hydrogen sulfide and pyruvate. This is Probable 3-mercaptopyruvate sulfurtransferase (sseA) from Pseudomonas aeruginosa (strain ATCC 15692 / DSM 22644 / CIP 104116 / JCM 14847 / LMG 12228 / 1C / PRS 101 / PAO1).